The sequence spans 452 residues: Netrin-5 (452 aa).

A signal peptide spans 1–34; sequence MTDYRTLFSSPGAGSTVTTPITLSLLLLLSQATS. 11 disulfide bridges follow: Cys-173/Cys-182, Cys-175/Cys-191, Cys-193/Cys-202, Cys-205/Cys-225, Cys-228/Cys-240, Cys-230/Cys-247, Cys-249/Cys-258, Cys-261/Cys-275, Cys-298/Cys-376, Cys-302/Cys-378, and Cys-317/Cys-438. Laminin EGF-like domains follow at residues 173-227 and 228-277; these read CQCH…PCLP and CQCH…PCQR. The NTR domain maps to 298 to 438; the sequence is CQGYCNVSVS…LQQKERGGAC (141 aa). The N-linked (GlcNAc...) asparagine glycan is linked to Asn-303.

The protein localises to the secreted. Plays a role in neurogenesis. Prevents motor neuron cell body migration out of the neural tube. This chain is Netrin-5 (Ntn5), found in Mus musculus (Mouse).